The sequence spans 339 residues: Methylthioribose-1-phosphate isomerase (339 aa).

Substrate is bound by residues 49–51, Arg-86, and Gln-187; that span reads RGA. Asp-228 functions as the Proton donor in the catalytic mechanism. 238 to 239 is a binding site for substrate; that stretch reads NK.

It belongs to the eIF-2B alpha/beta/delta subunits family. MtnA subfamily.

The enzyme catalyses 5-(methylsulfanyl)-alpha-D-ribose 1-phosphate = 5-(methylsulfanyl)-D-ribulose 1-phosphate. Its pathway is amino-acid biosynthesis; L-methionine biosynthesis via salvage pathway; L-methionine from S-methyl-5-thio-alpha-D-ribose 1-phosphate: step 1/6. Its function is as follows. Catalyzes the interconversion of methylthioribose-1-phosphate (MTR-1-P) into methylthioribulose-1-phosphate (MTRu-1-P). This Cronobacter sakazakii (strain ATCC BAA-894) (Enterobacter sakazakii) protein is Methylthioribose-1-phosphate isomerase.